A 951-amino-acid chain; its full sequence is Protein inturned (951 aa).

3 disordered regions span residues 1–32 (MEHS…FSSS), 189–208 (SSRN…NQRL), and 687–765 (TPKR…GGSG). One can recognise a PDZ domain in the interval 187–269 (HQSSRNSKRS…PMQLKLTFET (83 aa)). Low complexity predominate over residues 715 to 726 (PTRSSGGSDSGT). Positions 743–752 (MARKFGRRES) are enriched in basic and acidic residues. Residues 754–765 (GSGGSDGSGGSG) are compositionally biased toward gly residues.

This sequence belongs to the inturned family. As to quaternary structure, interacts with fuz and wdpcp; fuz, intu and wdpcp probably form the core CPLANE (ciliogenesis and planar polarity effectors) complex. Expressed in the neural plate during neural tube closure with subsequent strong expression in the ventral neural tube and in facial mesenchyme.

Its subcellular location is the cell surface. It is found in the cell membrane. The protein resides in the cytoplasm. The protein localises to the cytoskeleton. It localises to the cilium basal body. Plays a role in the definition of cell polarity via the planar cell polarity (PCP) cascade. Required for ciliogenesis by controlling the organization of the apical actin cytoskeleton and the positioning of the basal bodies at the apical cell surface, which in turn is essential for the normal orientation of elongating ciliary microtubules. Proposed to function as core component of a functional module called CPLANE (ciliogenesis and planar polarity effectors) involved in recruitment of peripheral IFT-A proteins to basal bodies. Controls the localization of both rhoa and disheveled in multi-ciliated cells. Has an indirect effect on hedgehog signaling. This chain is Protein inturned, found in Xenopus laevis (African clawed frog).